Consider the following 145-residue polypeptide: Lipoprotein signal peptidase (145 aa).

3 helical membrane passes run 1-21, 57-77, and 79-99; these read MVYI…LLVM, YLFI…YYKT, and GSGM…GNLI. Residues aspartate 109 and aspartate 123 contribute to the active site. A helical membrane pass occupies residues 115–135; that stretch reads IWPVFNLADSSVVIGAALLIL.

It belongs to the peptidase A8 family.

The protein resides in the cell inner membrane. The enzyme catalyses Release of signal peptides from bacterial membrane prolipoproteins. Hydrolyzes -Xaa-Yaa-Zaa-|-(S,diacylglyceryl)Cys-, in which Xaa is hydrophobic (preferably Leu), and Yaa (Ala or Ser) and Zaa (Gly or Ala) have small, neutral side chains.. Its pathway is protein modification; lipoprotein biosynthesis (signal peptide cleavage). Its function is as follows. This protein specifically catalyzes the removal of signal peptides from prolipoproteins. In Halothermothrix orenii (strain H 168 / OCM 544 / DSM 9562), this protein is Lipoprotein signal peptidase.